The sequence spans 378 residues: MTASFAFTIEHRDGEARAGTFATPHGPVYTPCFMPVGTQATVKTLTPAQLAETGAQMILANTYHLSLQPGADIVAGAGGLHGFMQWPGPILTDSGGFQVFSLSSLRTIDDDGVTFREPKSGALVRFTPEHAVAVQNALGADVIMAFDECPPYPADREQVEGAVERTLRWFERCVEAHRRSDQALFGIVQGGVWPDLRRRCAEGLVAADLPGYAIGGVSVGEPQTLIERVVRVTAPLLPEHKPRYLMGVGTFREMAQAVAVGVDLFDCVMPTRVARHGSALLLGTGGDRRINLKNAQFRRDYEPLDCVCPCYTCRHFSRAYLAHLVRSEEILAMTLLSIHNVATLTRFAALLRCAIATGSFAQEFAHYLQSGPEPVLSN.

Aspartate 93 acts as the Proton acceptor in catalysis. Substrate-binding positions include 93 to 97, aspartate 147, glutamine 189, and glycine 216; that span reads DSGGF. Residues 247 to 253 are RNA binding; that stretch reads GVGTFRE. Aspartate 266 acts as the Nucleophile in catalysis. Positions 271–275 are RNA binding; important for wobble base 34 recognition; that stretch reads TRVAR. Zn(2+)-binding residues include cysteine 308, cysteine 310, cysteine 313, and histidine 339.

It belongs to the queuine tRNA-ribosyltransferase family. Homodimer. Within each dimer, one monomer is responsible for RNA recognition and catalysis, while the other monomer binds to the replacement base PreQ1. Zn(2+) is required as a cofactor.

It catalyses the reaction 7-aminomethyl-7-carbaguanine + guanosine(34) in tRNA = 7-aminomethyl-7-carbaguanosine(34) in tRNA + guanine. It functions in the pathway tRNA modification; tRNA-queuosine biosynthesis. Its function is as follows. Catalyzes the base-exchange of a guanine (G) residue with the queuine precursor 7-aminomethyl-7-deazaguanine (PreQ1) at position 34 (anticodon wobble position) in tRNAs with GU(N) anticodons (tRNA-Asp, -Asn, -His and -Tyr). Catalysis occurs through a double-displacement mechanism. The nucleophile active site attacks the C1' of nucleotide 34 to detach the guanine base from the RNA, forming a covalent enzyme-RNA intermediate. The proton acceptor active site deprotonates the incoming PreQ1, allowing a nucleophilic attack on the C1' of the ribose to form the product. After dissociation, two additional enzymatic reactions on the tRNA convert PreQ1 to queuine (Q), resulting in the hypermodified nucleoside queuosine (7-(((4,5-cis-dihydroxy-2-cyclopenten-1-yl)amino)methyl)-7-deazaguanosine). This Gloeobacter violaceus (strain ATCC 29082 / PCC 7421) protein is Queuine tRNA-ribosyltransferase.